We begin with the raw amino-acid sequence, 115 residues long: Synaptobrevin homolog 2 (115 aa).

Residues 1-16 (MSSSVPYDPYVPPEES) are compositionally biased toward low complexity. The disordered stretch occupies residues 1–28 (MSSSVPYDPYVPPEESNSGANPNSQNKT). Residues 1-93 (MSSSVPYDPY…MWWKDLKMRM (93 aa)) lie on the Cytoplasmic side of the membrane. The segment covering 17–28 (NSGANPNSQNKT) has biased composition (polar residues). The v-SNARE coiled-coil homology domain maps to 27-87 (KTAALRQEID…NRVRKQMWWK (61 aa)). The residue at position 58 (serine 58) is a Phosphoserine. A Glycyl lysine isopeptide (Lys-Gly) (interchain with G-Cter in ubiquitin) cross-link involves residue lysine 62. Residue cysteine 94 is the site of S-palmitoyl cysteine attachment. Residues 94-112 (CLFLVVIILLVVIIVPIVV) traverse the membrane as a helical; Anchor for type IV membrane protein segment. The Vesicular segment spans residues 113–115 (HFS).

The protein belongs to the synaptobrevin family. In terms of processing, palmitoylated by SWF1.

It localises to the endomembrane system. Its function is as follows. SNC1 and SNC2 are vesicle-targeting proteins essential for normal secretory traffic between the Golgi and the plasma membrane. They may also be involved in vesicle fusion. In Saccharomyces cerevisiae (strain ATCC 204508 / S288c) (Baker's yeast), this protein is Synaptobrevin homolog 2 (SNC2).